Consider the following 543-residue polypeptide: Glutamyl-tRNA(Gln) amidotransferase subunit A, chloroplastic/mitochondrial (543 aa).

Active-site charge relay system residues include K123 and S198. The active-site Acyl-ester intermediate is S222.

This sequence belongs to the amidase family. GatA subfamily. As to quaternary structure, subunit of the heterotrimeric GatCAB amidotransferase (AdT) complex, composed of A, B and C subunits.

It localises to the mitochondrion. Its subcellular location is the plastid. The protein resides in the chloroplast stroma. It catalyses the reaction L-glutamyl-tRNA(Gln) + L-glutamine + ATP + H2O = L-glutaminyl-tRNA(Gln) + L-glutamate + ADP + phosphate + H(+). Functionally, allows the formation of correctly charged Gln-tRNA(Gln) through the transamidation of misacylated Glu-tRNA(Gln) in chloroplasts and mitochondria. The reaction takes place in the presence of glutamine and ATP through an activated gamma-phospho-Glu-tRNA(Gln). This Oryza sativa subsp. japonica (Rice) protein is Glutamyl-tRNA(Gln) amidotransferase subunit A, chloroplastic/mitochondrial.